Reading from the N-terminus, the 526-residue chain is MFS-type transporter clz19 (526 aa).

The segment at 1 to 49 (MNVDTTSPQAPLAGVESKQDGASNEATAKAESTTHDQNESSSFDERPVH) is disordered. Positions 32 to 49 (STTHDQNESSSFDERPVH) are enriched in basic and acidic residues. Residue Asn38 is glycosylated (N-linked (GlcNAc...) asparagine). The chain crosses the membrane as a helical span at residues 59 to 79 (ALLAVASFAAAISPASTTTYY). A glycan (N-linked (GlcNAc...) asparagine) is linked at Asn97. The next 3 helical transmembrane spans lie at 126 to 143 (VYLVSLSINMAANLGLAL), 186 to 206 (AYLTLGLVMGPALGPLIGGLL), and 214 to 234 (AIFWFLMILGGFFFLMVLTFF). 2 N-linked (GlcNAc...) asparagine glycosylation sites follow: Asn238 and Asn253. A run of 6 helical transmembrane segments spans residues 294–314 (FIVCMYGALLFGGYASVISIF), 322–342 (YGYSQVQVGLCYLPFGVGSIL), 384–404 (LTVSFPMIFATCGFVVAYGWL), 411–431 (VASVLVVVFLIANVFTGVLIA), 446–466 (ALGAAMNLTRCLMGAGGVAAV), and 473–493 (IGIGYTATATAGVWVVTLPAL).

The protein belongs to the major facilitator superfamily.

The protein localises to the membrane. Its function is as follows. MFS-type transporter; part of the gene cluster that mediates the biosynthesis of squalestatin S1 (SQS1, also known as zaragozic acid A), a heavily oxidized fungal polyketide that offers potent cholesterol lowering activity by targeting squalene synthase (SS). The sequence is that of MFS-type transporter clz19 from Cochliobolus lunatus (Filamentous fungus).